The sequence spans 62 residues: Large ribosomal subunit protein uL30 (62 aa).

This sequence belongs to the universal ribosomal protein uL30 family. As to quaternary structure, part of the 50S ribosomal subunit.

The sequence is that of Large ribosomal subunit protein uL30 from Heliobacterium modesticaldum (strain ATCC 51547 / Ice1).